The primary structure comprises 635 residues: 1-deoxy-D-xylulose-5-phosphate synthase (635 aa).

Residues histidine 72 and 113–115 (GHA) contribute to the thiamine diphosphate site. Position 144 (aspartate 144) interacts with Mg(2+). Residues 145 to 146 (GA), asparagine 174, tyrosine 287, and glutamate 370 contribute to the thiamine diphosphate site. Asparagine 174 is a binding site for Mg(2+).

Belongs to the transketolase family. DXPS subfamily. As to quaternary structure, homodimer. Requires Mg(2+) as cofactor. The cofactor is thiamine diphosphate.

It catalyses the reaction D-glyceraldehyde 3-phosphate + pyruvate + H(+) = 1-deoxy-D-xylulose 5-phosphate + CO2. The protein operates within metabolic intermediate biosynthesis; 1-deoxy-D-xylulose 5-phosphate biosynthesis; 1-deoxy-D-xylulose 5-phosphate from D-glyceraldehyde 3-phosphate and pyruvate: step 1/1. In terms of biological role, catalyzes the acyloin condensation reaction between C atoms 2 and 3 of pyruvate and glyceraldehyde 3-phosphate to yield 1-deoxy-D-xylulose-5-phosphate (DXP). The chain is 1-deoxy-D-xylulose-5-phosphate synthase from Trichodesmium erythraeum (strain IMS101).